We begin with the raw amino-acid sequence, 1085 residues long: Solute carrier family 12 member 4 (1085 aa).

At 1–119 the chain is on the cytoplasmic side; sequence MPHFTVVPVD…RRAAKAPSMG (119 aa). 5 positions are modified to phosphoserine: Ser24, Ser47, Ser51, Ser81, and Ser88. The tract at residues 32-56 is disordered; sequence AEREDSDGQGNHRENSPFLSPLDAS. A discontinuously helical transmembrane segment spans residues 120 to 141; that stretch reads TLMGVYLPCLQNIFGVILFLRL. Positions 131 and 132 each coordinate K(+). Topologically, residues 142 to 149 are extracellular; it reads TWMVGTAG. Residues 150 to 172 traverse the membrane as a helical segment; it reads VLQALLIVLICCCCTLLTAISMS. Over 173–196 the chain is Cytoplasmic; sequence AIATNGVVPAGGSYFMISRSLGPE. A helical transmembrane segment spans residues 197-225; sequence FGGAVGLCFYLGTTFAAAMYILGAIEILL. Tyr216 contacts K(+). The Extracellular portion of the chain corresponds to 226-248; sequence TYIAPPAAIFYPSGTHDMSSATL. 2 consecutive transmembrane segments (helical) span residues 249–271 and 272–297; these read NNMRVYGTIFLTFMTLVVFVGVK and YVNKFASLFLACVIISILSIYVGGIK. Over 298-419 the chain is Extracellular; that stretch reads SAFDPPVFPV…LYVVADIATS (122 aa). Cys308 and Cys323 are joined by a disulfide. Asn312, Asn331, and Asn347 each carry an N-linked (GlcNAc...) asparagine glycan. Cys343 and Cys353 are disulfide-bonded. Residues 420–440 traverse the membrane as a helical segment; sequence FTVLVGIFFPSVTGIMAGSNR. Residues Pro429 and Thr432 each coordinate K(+). 3 residues coordinate chloride: Gly433, Ile434, and Met435. At 441–450 the chain is on the cytoplasmic side; sequence SGDLRDAQKS. Residues 451–473 traverse the membrane as a helical segment; that stretch reads IPVGTILAIVTTSLVYFSSVILF. The Extracellular segment spans residues 474–504; it reads GACIEGVVLRDKYGDGVSRNLVVGTLAWPSP. Residues 505–531 traverse the membrane as a helical segment; sequence WVIVVGSFFSTCGAGLQSLTGAPRLLQ. Residues 532–554 are Cytoplasmic-facing; the sequence is AIAKDNIIPFLRVFGHGKANGEP. 2 consecutive transmembrane segments (helical) span residues 555–575 and 576–598; these read TWALLLTALIAELGILIASLD and MVAPILSMFFLMCYLFVNLACAV. Tyr589 contributes to the chloride binding site. Over 599–612 the chain is Cytoplasmic; the sequence is QTLLRTPNWRPRFK. 2 consecutive transmembrane segments (helical) span residues 613–635 and 636–651; these read YYHWALSFLGMSLCLALMFVSSW and YYALVAMVIAGMIYKY. Topologically, residues 652 to 1085 are cytoplasmic; it reads IEYQGAEKEW…GGREVITIYS (434 aa). Positions 665–681 are scissor helix; that stretch reads IRGLSLSAARYALLRLE. Leu697, Lys699, Lys707, Tyr708, and Val730 together coordinate ATP. Ser734 is subject to Phosphoserine. Gly794, Trp795, and Tyr797 together coordinate ATP. Phosphoserine is present on residues Ser916 and Ser967. The residue at position 983 (Thr983) is a Phosphothreonine. Ser1050 is subject to Phosphoserine.

This sequence belongs to the SLC12A transporter family. K/Cl co-transporter subfamily. In terms of assembly, homodimer; adopts a domain-swap conformation at the scissor helices connecting the transmembrane domain and C-terminal domain. Heterodimer with other K-Cl cotransporters. In terms of processing, N-glycosylated. Phosphorylated, phosphorylation may regulate transporter activity. As to expression, ubiquitous.

The protein resides in the cell membrane. The enzyme catalyses K(+)(in) + chloride(in) = K(+)(out) + chloride(out). Inhibited by WNK3. Functionally, mediates electroneutral potassium-chloride cotransport when activated by cell swelling. May contribute to cell volume homeostasis in single cells. May be involved in the regulation of basolateral Cl(-) exit in NaCl absorbing epithelia. The polypeptide is Solute carrier family 12 member 4 (Slc12a4) (Rattus norvegicus (Rat)).